The primary structure comprises 429 residues: TNFAIP3-interacting protein 2 (429 aa).

Ser7 is subject to Phosphoserine. Residues 29-117 (QRLRRLQDQL…MQQLLSQPQH (89 aa)) are a coiled coil. A compositionally biased stretch (basic and acidic residues) spans 177–195 (HAQRNVGERSPDQSEHTDG). A disordered region spans residues 177-199 (HAQRNVGERSPDQSEHTDGHTSV). 2 coiled-coil regions span residues 196–226 (HTSVQSVIEKLQEENRLLKQKVTHVEDLNAK) and 255–340 (ELMR…QVSW). The interval 289 to 347 (RDAALERVQMLEQQILAYKDDFMSERADRERAQSRIQELEEKVASLLHQVSWRQDSREP) is ubiquitin-binding domain (UBD). The tract at residues 372 to 400 (PGGWRPGTGSQQPEPPAEGGHPGAAQRGQ) is disordered. Over residues 388–397 (AEGGHPGAAQ) the composition is skewed to low complexity. The segment at 397–429 (QRGQGDLQCPHCLQCFSDEQGEELLRHVAECCQ) adopts a CCHC NOA-type zinc-finger fold. Zn(2+) contacts are provided by Cys405, Cys408, His423, and Cys427.

In terms of assembly, interacts with STK11/LKB1, TNFAIP3, IKBKG, NFKB1, MAP3K8, TEK, RIPK1, CHUK, IKBKB and SMARCD1. Interacts with polyubiquitin. As to quaternary structure, (Microbial infection) Interacts with severe fever with thrombocytopenia syndrome virus (SFTSV) NSs; this interaction promotes TPL2 complex formation and signaling activity leading to IL-10 production. In vitro phosphorylated by CHUK. In terms of processing, ubiquitinated; undergoes 'Lys-48'-linked polyubiquitination probably leading to constitutive proteasomal degradation which can be impaired by IKK-A/CHUK or IKBKB probably involving deubiquitination. Deubiquitinated by USP35; leading to stabilization and inhibition of TNFalpha-induced NF-kappa-B activation. In terms of tissue distribution, ubiquitously expressed in all tissues examined.

It is found in the cytoplasm. The protein resides in the nucleus. Inhibits NF-kappa-B activation by blocking the interaction of RIPK1 with its downstream effector NEMO/IKBKG. Forms a ternary complex with NFKB1 and MAP3K8 but appears to function upstream of MAP3K8 in the TLR4 signaling pathway that regulates MAP3K8 activation. Involved in activation of the MEK/ERK signaling pathway during innate immune response; this function seems to be stimulus- and cell type specific. Required for stability of MAP3K8. Involved in regulation of apoptosis in endothelial cells; promotes TEK agonist-stimulated endothelial survival. May act as transcriptional coactivator when translocated to the nucleus. Enhances CHUK-mediated NF-kappa-B activation involving NF-kappa-B p50-p65 and p50-c-Rel complexes. This chain is TNFAIP3-interacting protein 2, found in Homo sapiens (Human).